Here is a 468-residue protein sequence, read N- to C-terminus: Phosphomethylpyrimidine synthase (468 aa).

Substrate contacts are provided by residues asparagine 82, methionine 111, tyrosine 141, histidine 177, 197–199 (SRG), 238–241 (DSLR), and glutamate 277. Histidine 281 serves as a coordination point for Zn(2+). Tyrosine 304 lines the substrate pocket. Histidine 345 is a Zn(2+) binding site. The [4Fe-4S] cluster site is built by cysteine 425, cysteine 428, and cysteine 433.

It belongs to the ThiC family. [4Fe-4S] cluster is required as a cofactor.

The catalysed reaction is 5-amino-1-(5-phospho-beta-D-ribosyl)imidazole + S-adenosyl-L-methionine = 4-amino-2-methyl-5-(phosphooxymethyl)pyrimidine + CO + 5'-deoxyadenosine + formate + L-methionine + 3 H(+). Its pathway is cofactor biosynthesis; thiamine diphosphate biosynthesis. Functionally, catalyzes the synthesis of the hydroxymethylpyrimidine phosphate (HMP-P) moiety of thiamine from aminoimidazole ribotide (AIR) in a radical S-adenosyl-L-methionine (SAM)-dependent reaction. The polypeptide is Phosphomethylpyrimidine synthase (Prochlorococcus marinus (strain SARG / CCMP1375 / SS120)).